The chain runs to 217 residues: 3-demethoxyubiquinol 3-hydroxylase (217 aa).

Fe cation-binding residues include Glu66, Glu96, His99, Glu148, Glu180, and His183.

The protein belongs to the COQ7 family. The cofactor is Fe cation.

The protein localises to the cell membrane. It catalyses the reaction a 5-methoxy-2-methyl-3-(all-trans-polyprenyl)benzene-1,4-diol + AH2 + O2 = a 3-demethylubiquinol + A + H2O. Its pathway is cofactor biosynthesis; ubiquinone biosynthesis. Its function is as follows. Catalyzes the hydroxylation of 2-nonaprenyl-3-methyl-6-methoxy-1,4-benzoquinol during ubiquinone biosynthesis. The sequence is that of 3-demethoxyubiquinol 3-hydroxylase from Xanthomonas axonopodis pv. citri (strain 306).